Here is a 140-residue protein sequence, read N- to C-terminus: Methylglyoxal synthase (140 aa).

One can recognise an MGS-like domain in the interval 1-140 (MKIALIAHDR…HEGDRRPLAF (140 aa)). Residues H8, K12, 34–37 (TGTT), and 54–55 (SG) contribute to the substrate site. The active-site Proton donor/acceptor is D60. A substrate-binding site is contributed by H87.

Belongs to the methylglyoxal synthase family.

The enzyme catalyses dihydroxyacetone phosphate = methylglyoxal + phosphate. Catalyzes the formation of methylglyoxal from dihydroxyacetone phosphate. In Enterococcus faecalis (strain ATCC 700802 / V583), this protein is Methylglyoxal synthase.